A 504-amino-acid chain; its full sequence is Maturase K (504 aa).

This sequence belongs to the intron maturase 2 family. MatK subfamily.

It localises to the plastid. The protein resides in the chloroplast. Its function is as follows. Usually encoded in the trnK tRNA gene intron. Probably assists in splicing its own and other chloroplast group II introns. The protein is Maturase K of Gossypium barbadense (Sea Island cotton).